Consider the following 330-residue polypeptide: Aspartate--ammonia ligase (330 aa).

It belongs to the class-II aminoacyl-tRNA synthetase family. AsnA subfamily.

The protein localises to the cytoplasm. It catalyses the reaction L-aspartate + NH4(+) + ATP = L-asparagine + AMP + diphosphate + H(+). Its pathway is amino-acid biosynthesis; L-asparagine biosynthesis; L-asparagine from L-aspartate (ammonia route): step 1/1. The chain is Aspartate--ammonia ligase from Escherichia coli O127:H6 (strain E2348/69 / EPEC).